The chain runs to 339 residues: DNA double-strand break repair nuclease NurA (339 aa).

Mn(2+) contacts are provided by Asp58 and Asp133.

The protein belongs to the NurA family. As to quaternary structure, homodimer. Forms a complex with HerA. Requires Mn(2+) as cofactor.

With respect to regulation, nuclease activity requires the presence of HerA. Another report shows endo- and exonuclease activity in the absence of HerA; HerA stimulates the exo- but not endonuclease. LhrC-Core (Hel112) inhibits the exonuclease activity of the HerA-NurA complex on ss- and dsDNA, has no effect on the nicking activity of NurA. Endo- and exonuclease activities are inhibited by ATP; ATP may subtract divalent ions from the reaction preventing nuclease activity, HerA can alleviate ATP inhibition. In terms of biological role, involved in DNA double-strand break (DSB) repair. Probably acts with HerA to stimulate resection of the 5' strand and produce the long 3' single-strand that is required for RadA loading. NurA and HerA together stimulate the end-resection of six nucleotides of a linear DNA substrate. Processes linear double-stranded (ds)DNA probes with 3' or 5' single-stranded overhangs or blunt ends. Has endonuclease activity on single-stranded (ss)DNA and nicking activity on dsDNA without HerA as well as 5'- and 3'-exonuclease activity on ssDNA. Binds ssDNA, dsDNA, forked and bubble DNA equally well. The polypeptide is DNA double-strand break repair nuclease NurA (Saccharolobus solfataricus (strain ATCC 35092 / DSM 1617 / JCM 11322 / P2) (Sulfolobus solfataricus)).